The sequence spans 302 residues: Phosphate butyryltransferase (302 aa).

Belongs to the phosphate acetyltransferase and butyryltransferase family.

It catalyses the reaction butanoyl-CoA + phosphate = butanoyl phosphate + CoA. It participates in lipid metabolism; butanoate metabolism. Catalyzes the conversion of butyryl-CoA through butyryl phosphate to butyrate. This chain is Phosphate butyryltransferase (ptb), found in Clostridium beijerinckii (strain ATCC 51743 / NCIMB 8052) (Clostridium acetobutylicum).